We begin with the raw amino-acid sequence, 999 residues long: Helicase required for RNAi-mediated heterochromatin assembly 1 (999 aa).

A disordered region spans residues 61–90 (EQIETSETSKTQDSEGNKVDKNLKENKSIR). Basic and acidic residues predominate over residues 70–88 (KTQDSEGNKVDKNLKENKS). Position 94 is a phosphoserine (serine 94). The span at 106–124 (RNDITSGKNREFENEHHPA) shows a compositional bias: basic and acidic residues. The tract at residues 106–131 (RNDITSGKNREFENEHHPASDTSSWR) is disordered. 393–400 (GPPGTGKS) provides a ligand contact to ATP.

As to quaternary structure, cid12, hrr1 and rdp1 interact forming the RNA-directed RNA polymerase complex (RDRC). The RDRC complex interacts with the RITS complex via interaction between ago1 and hrr1. Clr4 has a role in mediating this interaction.

It localises to the cytoplasm. The protein localises to the nucleus. It catalyses the reaction ATP + H2O = ADP + phosphate + H(+). Has a role in the RNA interference (RNAi) pathway which is important for heterochromatin formation and accurate chromosome segregation. A member of the RNA-directed RNA polymerase complex (RDRC) which is involved in the generation of small interfering RNAs (siRNAs) and mediate their association with the RNA-induced transcriptional silencing (RITS) complex. RITS acts as a priming complex for dsRNA synthesis at the site of non-coding centromeric RNA. This chain is Helicase required for RNAi-mediated heterochromatin assembly 1 (hrr1), found in Schizosaccharomyces pombe (strain 972 / ATCC 24843) (Fission yeast).